We begin with the raw amino-acid sequence, 366 residues long: Alanine racemase (366 aa).

Residue Lys40 is the Proton acceptor; specific for D-alanine of the active site. Lys40 carries the N6-(pyridoxal phosphate)lysine modification. Residue Arg136 coordinates substrate. The Proton acceptor; specific for L-alanine role is filled by Tyr263. Met310 lines the substrate pocket.

This sequence belongs to the alanine racemase family. Pyridoxal 5'-phosphate is required as a cofactor.

It catalyses the reaction L-alanine = D-alanine. The protein operates within amino-acid biosynthesis; D-alanine biosynthesis; D-alanine from L-alanine: step 1/1. Functionally, catalyzes the interconversion of L-alanine and D-alanine. May also act on other amino acids. This chain is Alanine racemase (alr), found in Streptococcus pyogenes serotype M2 (strain MGAS10270).